The chain runs to 168 residues: 2-C-methyl-D-erythritol 2,4-cyclodiphosphate synthase (168 aa).

Residues aspartate 8 and histidine 10 each contribute to the a divalent metal cation site. 4-CDP-2-C-methyl-D-erythritol 2-phosphate-binding positions include 8–10 and 34–35; these read DLH and HS. Residue histidine 42 coordinates a divalent metal cation. Residues 56 to 58, 61 to 65, 132 to 135, and arginine 142 contribute to the 4-CDP-2-C-methyl-D-erythritol 2-phosphate site; these read DIG, FPDTD, and TTTE.

Belongs to the IspF family. Homotrimer. A divalent metal cation serves as cofactor.

The enzyme catalyses 4-CDP-2-C-methyl-D-erythritol 2-phosphate = 2-C-methyl-D-erythritol 2,4-cyclic diphosphate + CMP. It participates in isoprenoid biosynthesis; isopentenyl diphosphate biosynthesis via DXP pathway; isopentenyl diphosphate from 1-deoxy-D-xylulose 5-phosphate: step 4/6. Involved in the biosynthesis of isopentenyl diphosphate (IPP) and dimethylallyl diphosphate (DMAPP), two major building blocks of isoprenoid compounds. Catalyzes the conversion of 4-diphosphocytidyl-2-C-methyl-D-erythritol 2-phosphate (CDP-ME2P) to 2-C-methyl-D-erythritol 2,4-cyclodiphosphate (ME-CPP) with a corresponding release of cytidine 5-monophosphate (CMP). The polypeptide is 2-C-methyl-D-erythritol 2,4-cyclodiphosphate synthase (Desulfosudis oleivorans (strain DSM 6200 / JCM 39069 / Hxd3) (Desulfococcus oleovorans)).